A 143-amino-acid chain; its full sequence is uncharacterized protein (143 aa).

Residues Leu65–Val85 form a helical membrane-spanning segment.

The protein resides in the membrane. This is an uncharacterized protein from Saccharomyces cerevisiae (strain ATCC 204508 / S288c) (Baker's yeast).